Consider the following 556-residue polypeptide: MSEAEARPSNFIRQIIDKDLADGKHTTVHTRFPPEPNGYLHIGHAKSICLNFGIAQDYQGQCNLRFDDTNPEKENLEYVESIKKDVTWLGFDWSGEVCYSSDYFDKLYEYAIELIQKGLAYVDELTPEQIREYRGTLTEPGKHSPYRDRSVEENLALFEKMRAGEFAEGQACLRAKIDMASSFIVMRDPVLYRVRFAEHHQTGDKWCIYPMYDFTHCISDALEGITHSICTLEFQDNRRLYDWVLDNITIPCHPRQYEFSRLNLEYTVMSKRKLNQLVTEKLVTGWDDPRMPTISGLRRRGFTPSAIREFCKRIGVTKQENMIEYSALESCIRDDLNENAPRAMAVLDPVKLVIENFAAGTVETLTLANHPNKPEMGDREVPFTRELWIEREDFREEANKKYKRLVLGKEVRLRGAYVIKAERIEKDEQGNITTIFCSYDPETLGKNPADGRKVKGVIHWVSAEKGVPAEFRLYERLFTVPNPGAADNFAETINPESLVKVQGYVEPSLVEAKPEFGYQFERMGYFCADNKDSSPQALVFNRTVGLRDSFAKIDEE.

Residues Pro34–His44 carry the 'HIGH' region motif. ATP-binding positions include Glu35–Asn37 and His41–Ser47. L-glutamine is bound by residues Asp67 and Tyr212. ATP contacts are provided by residues Thr231, Arg261–Leu262, and Met269–Lys271. The short motif at Val268 to Arg272 is the 'KMSKS' region element.

Belongs to the class-I aminoacyl-tRNA synthetase family. As to quaternary structure, monomer.

The protein localises to the cytoplasm. The catalysed reaction is tRNA(Gln) + L-glutamine + ATP = L-glutaminyl-tRNA(Gln) + AMP + diphosphate. In Vibrio cholerae serotype O1 (strain ATCC 39315 / El Tor Inaba N16961), this protein is Glutamine--tRNA ligase.